We begin with the raw amino-acid sequence, 670 residues long: ATP-dependent RNA helicase DDX18 (670 aa).

2 stretches are compositionally biased toward polar residues: residues 31-42 and 83-105; these read SNLTLSETQNGD and VTKS…SSNS. The tract at residues 31–169 is disordered; it reads SNLTLSETQN…ESEVPSLPLG (139 aa). A compositionally biased stretch (basic and acidic residues) spans 117-154; that stretch reads MVNDAEPDTKKAKTENKGKSEEESAETTKETENNVEKP. The Q motif motif lies at 179–207; it reads FASLCNLVNENTLKAIKEMGFTNMTEIQH. Positions 210 to 385 constitute a Helicase ATP-binding domain; it reads IRPLLEGRDL…RISLKKEPLY (176 aa). 223–230 serves as a coordination point for ATP; it reads AKTGSGKT. Positions 333–336 match the DEAD box motif; it reads DEAD. A Helicase C-terminal domain is found at 399–569; that stretch reads GLEQGYVVCP…DIQSQLEKLI (171 aa).

This sequence belongs to the DEAD box helicase family. DDX18/HAS1 subfamily. In terms of assembly, interacts with NOL8; the interaction is RNA-dependent. Interacts with PRC2 complex components EZH2, SUZ2 and JARID2; these interactions prevent deposition of the repressive H3K27me3 mark onto rDNA in pluripotent cells.

The protein resides in the nucleus. The protein localises to the nucleolus. It localises to the chromosome. It catalyses the reaction ATP + H2O = ADP + phosphate + H(+). ATP-dependent RNA helicase that plays a role in the regulation of R-loop homeostasis in both endogenous R-loop-prone regions and at sites of DNA damage. At endogenous loci such as actively transcribed genes, may act as a helicase to resolve the formation of R-loop during transcription and prevent the interference of R-loop with DNA-replication machinery. Also participates in the removal of DNA-lesion-associated R-loop. Plays an essential role for establishing pluripotency during embryogenesis and for pluripotency maintenance in embryonic stem cells. Mechanistically, prevents the polycomb repressive complex 2 (PRC2) from accessing rDNA loci and protects the active chromatin status in nucleolus. This chain is ATP-dependent RNA helicase DDX18 (DDX18), found in Homo sapiens (Human).